A 275-amino-acid polypeptide reads, in one-letter code: Chemotaxis protein methyltransferase Cher2 (275 aa).

The CheR-type methyltransferase domain occupies 1 to 275; the sequence is MSTGNLDFEQ…CSPGIIYQAK (275 aa). S-adenosyl-L-methionine contacts are provided by residues N73, T75, R79, E116, D145, 201 to 202, and 218 to 219; these read NL and RN.

In terms of assembly, monomer.

The enzyme catalyses L-glutamyl-[protein] + S-adenosyl-L-methionine = [protein]-L-glutamate 5-O-methyl ester + S-adenosyl-L-homocysteine. Methylation of the membrane-bound methyl-accepting chemotaxis proteins (MCP) to form gamma-glutamyl methyl ester residues in MCP. Methylates the McpS chemotaxis receptor. This chain is Chemotaxis protein methyltransferase Cher2 (cheR2), found in Pseudomonas putida (strain ATCC 47054 / DSM 6125 / CFBP 8728 / NCIMB 11950 / KT2440).